The following is an 863-amino-acid chain: MSSPASTPSRRGSRRGRATPAQTPRSEDARSSPSQRRRGEDSTSTGELQPMPTSPGVDLQSPAAQDVLFSSPPQMHSSAIPLDFDVSSPLTYGTPSSRVEGTPRSGVRGTPVRQRPDLGSAQKGLQVDLQSDGAAAEDIVASEQSLGQKLVIWGTDVNVAACKENFQRFLQRFIDPLAKEEENVGIDITEPLYMQRLGEINVIGEPFLNVNCEHIKSFDKNLYRQLISYPQEVIPTFDMAVNEIFFDRYPDSILEHQIQVRPFNALKTKNMRNLNPEDIDQLITISGMVIRTSQLIPEMQEAFFQCQVCAHTTRVEMDRGRIAEPSVCGRCHTTHSMALIHNRSLFSDKQMIKLQESPEDMPAGQTPHTVILFAHNDLVDKVQPGDRVNVTGIYRAVPIRVNPRVSNVKSVYKTHIDVIHYRKTDAKRLHGLDEEAEQKLFSEKRVELLKELSRKPDIYERLASALAPSIYEHEDIKKGILLQLFGGTRKDFSHTGRGKFRAEINILLCGDPGTSKSQLLQYVYNLVPRGQYTSGKGSSAVGLTAYVMKDPETRQLVLQTGALVLSDNGICCIDEFDKMNESTRSVLHEVMEQQTLSIAKAGIICQLNARTSVLAAANPIESQWNPKKTTIENIQLPHTLLSRFDLIFLLLDPQDEAYDRRLAHHLVALYYQSEEQAEEELLDMAVLKDYIAYAHSTIMPRLSEEASQALIEAYVDMRKIGSSRGMVSAYPRQLESLIRLAEAHAKVRLSNKVEAIDVEEAKRLHREALKQSATDPRTGIVDISILTTGMSATSRKRKEELAEALKKLILSKGKTPALKYQQLFEDIRGQSDIAITKDMFEEALRALADDDFLTVTGKTVRLL.

Positions 1 to 10 (MSSPASTPSR) are enriched in low complexity. 2 disordered regions span residues 1 to 60 (MSSP…VDLQ) and 91 to 126 (TYGT…KGLQ). Serine 2 is modified (N-acetylserine). Phosphoserine; by CDC7 is present on serine 6. Threonine 7 and threonine 19 each carry phosphothreonine. Residues serine 26, serine 31, serine 32, and serine 34 each carry the phosphoserine modification. Threonine 102 carries the phosphothreonine modification. Serine 105 is subject to Phosphoserine. Threonine 110 is modified (phosphothreonine). Residues serine 120, serine 131, serine 142, and serine 145 each carry the phosphoserine modification. Lysine 220 is subject to N6-acetyllysine. Lysine 439 is covalently cross-linked (Glycyl lysine isopeptide (Lys-Gly) (interchain with G-Cter in SUMO2)). Position 450 is an N6-acetyllysine (lysine 450). An MCM domain is found at 458-667 (IYERLASALA…YDRRLAHHLV (210 aa)). ATP is bound by residues tyrosine 471, arginine 497, lysine 516, serine 517, asparagine 618, arginine 643, arginine 732, and glutamate 735. Positions 642–645 (SRFD) match the Arginine finger motif. A Glycyl lysine isopeptide (Lys-Gly) (interchain with G-Cter in SUMO2) cross-link involves residue lysine 798. N6-acetyllysine is present on lysine 858.

It belongs to the MCM family. Component of the MCM2-7 complex. The complex forms a toroidal hexameric ring with the proposed subunit order MCM2-MCM6-MCM4-MCM7-MCM3-MCM5. Component of the CMG helicase complex, a hexameric ring of related MCM2-7 subunits stabilized by CDC45 and the tetrameric GINS complex. Interacts with MCMBP. In terms of processing, sumoylated; SUMO2 modified in response to stress caused by inhibition of proteasome activity (in vitro).

It is found in the nucleus. The protein localises to the chromosome. The enzyme catalyses ATP + H2O = ADP + phosphate + H(+). Its function is as follows. Acts as a component of the MCM2-7 complex (MCM complex) which is the replicative helicase essential for 'once per cell cycle' DNA replication initiation and elongation in eukaryotic cells. Core component of CDC45-MCM-GINS (CMG) helicase, the molecular machine that unwinds template DNA during replication, and around which the replisome is built. The active ATPase sites in the MCM2-7 ring are formed through the interaction surfaces of two neighboring subunits such that a critical structure of a conserved arginine finger motif is provided in trans relative to the ATP-binding site of the Walker A box of the adjacent subunit. The six ATPase active sites, however, are likely to contribute differentially to the complex helicase activity. The sequence is that of DNA replication licensing factor MCM4 from Homo sapiens (Human).